A 197-amino-acid polypeptide reads, in one-letter code: FMN-dependent NADH:quinone oxidoreductase (197 aa).

Residues Ser-10, 16–18 (SQS), 93–96 (MYNF), and 137–140 (TRGG) each bind FMN.

The protein belongs to the azoreductase type 1 family. In terms of assembly, homodimer. FMN is required as a cofactor.

It catalyses the reaction 2 a quinone + NADH + H(+) = 2 a 1,4-benzosemiquinone + NAD(+). The enzyme catalyses N,N-dimethyl-1,4-phenylenediamine + anthranilate + 2 NAD(+) = 2-(4-dimethylaminophenyl)diazenylbenzoate + 2 NADH + 2 H(+). Its function is as follows. Quinone reductase that provides resistance to thiol-specific stress caused by electrophilic quinones. In terms of biological role, also exhibits azoreductase activity. Catalyzes the reductive cleavage of the azo bond in aromatic azo compounds to the corresponding amines. This Shewanella frigidimarina (strain NCIMB 400) protein is FMN-dependent NADH:quinone oxidoreductase.